The following is a 293-amino-acid chain: Fructose-bisphosphate aldolase (293 aa).

Position 50 (serine 50) interacts with D-glyceraldehyde 3-phosphate. Residue aspartate 85 is the Proton donor of the active site. Residues histidine 86, aspartate 106, glutamate 136, and histidine 178 each coordinate Zn(2+). A dihydroxyacetone phosphate-binding site is contributed by glycine 179. Histidine 208 provides a ligand contact to Zn(2+). Residues 209 to 211 (GGS) and 230 to 233 (NVNT) contribute to the dihydroxyacetone phosphate site.

It belongs to the class II fructose-bisphosphate aldolase family. Zn(2+) is required as a cofactor.

It carries out the reaction beta-D-fructose 1,6-bisphosphate = D-glyceraldehyde 3-phosphate + dihydroxyacetone phosphate. Its pathway is carbohydrate degradation; glycolysis; D-glyceraldehyde 3-phosphate and glycerone phosphate from D-glucose: step 4/4. Its function is as follows. Catalyzes the aldol condensation of dihydroxyacetone phosphate (DHAP or glycerone-phosphate) with glyceraldehyde 3-phosphate (G3P) to form fructose 1,6-bisphosphate (FBP) in gluconeogenesis and the reverse reaction in glycolysis. This chain is Fructose-bisphosphate aldolase (fba), found in Streptococcus pyogenes serotype M3 (strain ATCC BAA-595 / MGAS315).